Reading from the N-terminus, the 1576-residue chain is DExH-box ATP-dependent RNA helicase DExH2 (1576 aa).

The 64-residue stretch at 15-78 folds into the R3H domain; that stretch reads EATGAWATKV…ERRLSLFKGD (64 aa). The region spanning 227-396 is the Helicase ATP-binding domain; sequence ISAVESNQVV…FGGCPVVRVP (170 aa). 240-247 contacts ATP; the sequence is GETGCGKT. The DEIH box motif lies at 343 to 346; it reads DEIH. Residues 561 to 735 form the Helicase C-terminal domain; it reads LIVKLMKKIC…ELCLQVKMLD (175 aa). Disordered regions lie at residues 1137–1165, 1177–1223, and 1260–1576; these read ATSP…MGSK, MEES…SLNN, and DMGN…PSDQ. The segment covering 1281–1301 has biased composition (polar residues); sequence PNSANSMDLGNMEENTPSDLA. Residues 1305–1319 are compositionally biased toward basic and acidic residues; it reads KKKEPKSVSKLDLGS. Residues 1349-1360 carry the PH1 motif; the sequence is KQPEKKRSRSKK. Over residues 1352–1363 the composition is skewed to basic residues; it reads EKKRSRSKKRKS. Over residues 1381–1412 the composition is skewed to polar residues; the sequence is ANENEQTEPKSANNLDLGNMKENTPSDLANEN. The short motif at 1454 to 1465 is the PH2 element; sequence KQPKKKRSRSKK. Residues 1455 to 1467 are compositionally biased toward basic residues; it reads QPKKKRSRSKKCK. Residues 1490–1508 show a composition bias toward basic and acidic residues; the sequence is EQKDPESVNRLDPGKEKES. Residues 1509-1524 show a composition bias toward polar residues; the sequence is IPSNLVSGNEQPDSNT. Over residues 1528-1537 the composition is skewed to basic residues; sequence KKPKKKKRKL. Residues 1530–1537 carry the Nuclear localization signal motif; the sequence is PKKKKRKL. Polar residues predominate over residues 1540–1562; the sequence is NFDSVNNMEEKMPSTNVLSQGNK.

The protein belongs to the DExH box helicase family. As to quaternary structure, homodimer.

Its subcellular location is the nucleus. It catalyses the reaction ATP + H2O = ADP + phosphate + H(+). May function as an ATP-dependent RNA/DNA helicase. Binds DNA in vitro in a non-specific manner. In Arabidopsis thaliana (Mouse-ear cress), this protein is DExH-box ATP-dependent RNA helicase DExH2.